A 397-amino-acid polypeptide reads, in one-letter code: Purine ribonucleoside efflux pump NepI (397 aa).

Residues 1–21 (MNENIAEKFRADGVARPNWSA) are Cytoplasmic-facing. Residues 22–42 (VFAVAFCVACLITVEFLPVSL) form a helical membrane-spanning segment. The Periplasmic portion of the chain corresponds to 43-54 (LTPMAQDLGISE). Residues 55–75 (GVAGQSVTVTAFVAMFSSLFI) traverse the membrane as a helical segment. At 76–85 (TQIIQATDRR) the chain is on the cytoplasmic side. Residues 86 to 106 (YIVILFAVLLTASCLMVSFAN) form a helical membrane-spanning segment. S107 is a topological domain (periplasmic). The helical transmembrane segment at 108 to 128 (FTLLLLGRACLGLALGGFWAM) threads the bilayer. Residues 129 to 147 (SASLTMRLVPARTVPKALS) are Cytoplasmic-facing. Residues 148-168 (VIFGAVSIALVIAAPLGSFLG) form a helical membrane-spanning segment. The Periplasmic segment spans residues 169 to 175 (GIIGWRN). Residues 176–196 (VFNAAAVMGVLCVIWVVKSLP) form a helical membrane-spanning segment. At 197-215 (SLPGEPSHQKQNMFSLLQR) the chain is on the cytoplasmic side. The helical transmembrane segment at 216–236 (PGVMAGMIAIFMSFAGQFAFF) threads the bilayer. The Periplasmic portion of the chain corresponds to 237 to 255 (TYIRPVYMNLAGFDVDGLT). A helical transmembrane segment spans residues 256–276 (LVLLSFGIASFVGTSFSSYVL). Residues 277 to 281 (KRSVK) are Cytoplasmic-facing. The chain crosses the membrane as a helical span at residues 282-302 (LALAGAPLLLALSALTLIVWG). The Periplasmic portion of the chain corresponds to 303-305 (SDK). The chain crosses the membrane as a helical span at residues 306-326 (TVAAAIAIIWGLAFALVPVGW). The Cytoplasmic segment spans residues 327-343 (STWITRSLADQAEKAGS). A helical membrane pass occupies residues 344–364 (IQVAVIQLANTCGAAVGGYAL). Residues 365-366 (DN) are Periplasmic-facing. A helical membrane pass occupies residues 367–387 (FGLLSPLALSGGLMLLTALVV). Residues 388–397 (AAKVRITPMS) lie on the Cytoplasmic side of the membrane.

It belongs to the major facilitator superfamily. DHA1 family. NepI (TC 2.A.1.2.26) subfamily.

Its subcellular location is the cell inner membrane. The enzyme catalyses inosine(in) + H(+)(out) = inosine(out) + H(+)(in). It catalyses the reaction guanosine(in) + H(+)(out) = guanosine(out) + H(+)(in). Involved in the efflux of purine ribonucleosides, such as inosine and guanosine. This chain is Purine ribonucleoside efflux pump NepI, found in Salmonella choleraesuis (strain SC-B67).